We begin with the raw amino-acid sequence, 384 residues long: 8-amino-7-oxononanoate synthase (384 aa).

Residue R21 participates in substrate binding. 108 to 109 (GF) contributes to the pyridoxal 5'-phosphate binding site. H133 lines the substrate pocket. Positions 179, 207, and 233 each coordinate pyridoxal 5'-phosphate. The residue at position 236 (K236) is an N6-(pyridoxal phosphate)lysine. Residue T352 coordinates substrate.

It belongs to the class-II pyridoxal-phosphate-dependent aminotransferase family. BioF subfamily. Homodimer. Requires pyridoxal 5'-phosphate as cofactor.

It carries out the reaction 6-carboxyhexanoyl-[ACP] + L-alanine + H(+) = (8S)-8-amino-7-oxononanoate + holo-[ACP] + CO2. Its pathway is cofactor biosynthesis; biotin biosynthesis. In terms of biological role, catalyzes the decarboxylative condensation of pimeloyl-[acyl-carrier protein] and L-alanine to produce 8-amino-7-oxononanoate (AON), [acyl-carrier protein], and carbon dioxide. This is 8-amino-7-oxononanoate synthase from Escherichia coli (strain UTI89 / UPEC).